We begin with the raw amino-acid sequence, 40 residues long: Antimicrobial peptide 2 (40 aa).

The region spanning 1–40 is the Chitin-binding type-1 domain; that stretch reads AQCGAQGGGATCPGGLCCSQWGWCGSTPKYCGAGCQSNCR. Intrachain disulfides connect Cys3–Cys18, Cys12–Cys24, Cys17–Cys31, and Cys35–Cys39.

In terms of processing, not glycosylated.

Its function is as follows. Antimicrobial peptide active against plant pathogenic fungi and Gram-negative and -positive bacteria. In Fagopyrum esculentum (Common buckwheat), this protein is Antimicrobial peptide 2.